The chain runs to 264 residues: Thymidylate synthase (264 aa).

Arginine 21 is a binding site for dUMP. Histidine 51 provides a ligand contact to (6R)-5,10-methylene-5,6,7,8-tetrahydrofolate. A dUMP-binding site is contributed by 126 to 127 (RR). Catalysis depends on cysteine 146, which acts as the Nucleophile. DUMP is bound by residues 166–169 (RSVD), asparagine 177, and 207–209 (HLY). Aspartate 169 is a (6R)-5,10-methylene-5,6,7,8-tetrahydrofolate binding site. A (6R)-5,10-methylene-5,6,7,8-tetrahydrofolate-binding site is contributed by alanine 263.

Belongs to the thymidylate synthase family. Bacterial-type ThyA subfamily. As to quaternary structure, homodimer.

The protein localises to the cytoplasm. It carries out the reaction dUMP + (6R)-5,10-methylene-5,6,7,8-tetrahydrofolate = 7,8-dihydrofolate + dTMP. It functions in the pathway pyrimidine metabolism; dTTP biosynthesis. Catalyzes the reductive methylation of 2'-deoxyuridine-5'-monophosphate (dUMP) to 2'-deoxythymidine-5'-monophosphate (dTMP) while utilizing 5,10-methylenetetrahydrofolate (mTHF) as the methyl donor and reductant in the reaction, yielding dihydrofolate (DHF) as a by-product. This enzymatic reaction provides an intracellular de novo source of dTMP, an essential precursor for DNA biosynthesis. The polypeptide is Thymidylate synthase (Geobacillus thermodenitrificans (strain NG80-2)).